The chain runs to 173 residues: NADH-ubiquinone oxidoreductase chain 6 (173 aa).

5 consecutive transmembrane segments (helical) span residues 1–21, 27–47, 48–68, 87–107, and 139–159; these read MTYFVIFLGICFMLGVLAVAS, YGVVGLVVASVMGCGWLVSLG, VSFVSLALFLVYLGGMLVVFV, VVGYGLGFVLVVWMGVVLGGL, and CGVGLFLVAGWGLLLALFVVL.

The protein belongs to the complex I subunit 6 family. As to quaternary structure, core subunit of respiratory chain NADH dehydrogenase (Complex I) which is composed of 45 different subunits.

Its subcellular location is the mitochondrion inner membrane. It catalyses the reaction a ubiquinone + NADH + 5 H(+)(in) = a ubiquinol + NAD(+) + 4 H(+)(out). Its function is as follows. Core subunit of the mitochondrial membrane respiratory chain NADH dehydrogenase (Complex I) which catalyzes electron transfer from NADH through the respiratory chain, using ubiquinone as an electron acceptor. Essential for the catalytic activity and assembly of complex I. This chain is NADH-ubiquinone oxidoreductase chain 6 (MT-ND6), found in Gallus gallus (Chicken).